The chain runs to 429 residues: GTPase Obg (429 aa).

The Obg domain maps to 1–158 (MFVDQVKIYV…RNVQLELKVL (158 aa)). Residues 124–145 (RGNKRFATPANPAPELSENGEP) are disordered. Residues 159–329 (ADVGLVGFPS…LLLAIADKLE (171 aa)) enclose the OBG-type G domain. Residues 165 to 172 (GFPSVGKS), 190 to 194 (FTTIV), 212 to 215 (DLPG), 282 to 285 (NKMD), and 310 to 312 (SAV) contribute to the GTP site. Mg(2+)-binding residues include Ser172 and Thr192. One can recognise an OCT domain in the interval 351–429 (KYVAEEPDFE…LLDYEFEFMD (79 aa)).

The protein belongs to the TRAFAC class OBG-HflX-like GTPase superfamily. OBG GTPase family. Monomer. Requires Mg(2+) as cofactor.

The protein resides in the cytoplasm. An essential GTPase which binds GTP, GDP and possibly (p)ppGpp with moderate affinity, with high nucleotide exchange rates and a fairly low GTP hydrolysis rate. Plays a role in control of the cell cycle, stress response, ribosome biogenesis and in those bacteria that undergo differentiation, in morphogenesis control. The protein is GTPase Obg of Listeria innocua serovar 6a (strain ATCC BAA-680 / CLIP 11262).